We begin with the raw amino-acid sequence, 1928 residues long: Lactase/phlorizin hydrolase (1928 aa).

Residues 1–21 (MELPWTALFLSTVLLGLSCQG) form the signal peptide. The propeptide at 22 to 867 (SDWESDRNFI…LPVRADFTSR (846 aa)) is XBetaGly. The Extracellular portion of the chain corresponds to 22 to 1883 (SDWESDRNFI…LMLGIAEAQT (1862 aa)). The interval 46 to 289 (NYPPGKQGSD…FIYTLKLEDC (244 aa)) is glycosyl hydrolase-1 1; Region I. The segment at 364-856 (VWAAFANQSR…GFSAKKVKRN (493 aa)) is glycosyl hydrolase-1 2; Region II. 7 N-linked (GlcNAc...) asparagine glycosylation sites follow: Asn370, Asn514, Asn824, Asn936, Asn948, Asn991, and Asn1037. Positions 904-1367 (RFRDDFLWGV…DLIANNGMPL (464 aa)) are glycosyl hydrolase-1 3; Region III. Phlorizin hydrolase/Glycosylceramidase activity. Glu1067 functions as the Proton donor; for phlorizin hydrolase/Glycosylceramidase activity in the catalytic mechanism. Asn1176 and Asn1240 each carry an N-linked (GlcNAc...) asparagine glycan. The Nucleophile; for phlorizin hydrolase/Glycosylceramidase activity role is filled by Glu1274. N-linked (GlcNAc...) asparagine glycosylation is found at Asn1281 and Asn1509. Positions 1374-1847 (LYGEFPKGFI…CNGFPDPAQG (474 aa)) are glycosyl hydrolase-1 4; Region IV. Lactase activity. Catalysis depends on Glu1539, which acts as the Proton donor; for lactase activity. 2 N-linked (GlcNAc...) asparagine glycosylation sites follow: Asn1657 and Asn1684. Glu1750 serves as the catalytic Nucleophile; for lactase activity. 2 N-linked (GlcNAc...) asparagine glycosylation sites follow: Asn1762 and Asn1815. A helical membrane pass occupies residues 1884–1902 (ALYVLFALLLLGACSLAFL). Residues 1903 to 1928 (TYNTGRRSKQGNAQPSQHQLSPISSF) lie on the Cytoplasmic side of the membrane.

This sequence belongs to the glycosyl hydrolase 1 family. In terms of assembly, homodimer. In terms of processing, N-glycosylated. Intestine.

Its subcellular location is the apical cell membrane. The enzyme catalyses lactose + H2O = beta-D-galactose + D-glucose. It carries out the reaction phlorizin + H2O = phloretin + beta-D-glucose. It catalyses the reaction D-cellobiose + H2O = beta-D-glucose + D-glucose. The catalysed reaction is quercetin 4'-O-beta-D-glucoside + H2O = quercetin + beta-D-glucose. The enzyme catalyses quercetin 3-O-beta-D-glucoside + H2O = quercetin + beta-D-glucose. It carries out the reaction kaempferol 3-O-beta-D-glucoside + H2O = kaempferol + beta-D-glucose. It catalyses the reaction luteolin 7-O-beta-D-glucoside + H2O = luteolin + beta-D-glucose. The catalysed reaction is luteolin 4'-O-beta-D-glucoside + H2O = luteolin + beta-D-glucose. The enzyme catalyses (2S)-naringenin 7-O-beta-D-glucoside + H2O = (2S)-naringenin + beta-D-glucose. It carries out the reaction eriodictyol-7-O-beta-D-glucoside + H2O = (S)-eriodictyol + beta-D-glucose. It catalyses the reaction apigenin 7-O-beta-D-glucoside + H2O = apigenin + beta-D-glucose. The catalysed reaction is daidzein 7-O-beta-D-glucoside + H2O = daidzein + beta-D-glucose + H(+). The enzyme catalyses genistein 7-O-beta-D-glucoside + H2O = genistein + beta-D-glucose. It carries out the reaction a beta-D-galactosyl-N-acylsphingosine + H2O = a ceramide + beta-D-galactose.. It catalyses the reaction beta-D-glucosyl-(1&lt;-&gt;1')-N-hexadecanoylsphing-4-enine + H2O = N-hexadecanoylsphing-4-enine + beta-D-glucose. The catalysed reaction is beta-D-galactosyl-(1&lt;-&gt;1')-N-hexadecanoylsphing-4-enine + H2O = beta-D-galactose + N-hexadecanoylsphing-4-enine. The enzyme catalyses beta-D-galactosyl-(1&lt;-&gt;1')-N-hexadecanoylsphinganine + H2O = N-hexadecanoylsphinganine + beta-D-galactose. It carries out the reaction beta-D-glucosyl-(1&lt;-&gt;1')-N-hexadecanoylsphinganine + H2O = N-hexadecanoylsphinganine + beta-D-glucose. Its function is as follows. Broad specificity glycosidase of the intestinal brush border membrane that hydrolyzes lactose, the main sugar in mammalian milk, to produce D-glucose and D-galactose. The mature protein is composed of two domains that catalyze the hydrolysis of beta-glucopyranosides and beta-galactopyranosides, with a preference for hydrophilic aglycones (in lactose and cellobiose) for one domain and hydrophobic aglycones (in phlorizin and glycosylceramides) for the other. The sequence is that of Lactase/phlorizin hydrolase from Rattus norvegicus (Rat).